The chain runs to 211 residues: Thymidylate kinase (211 aa).

7–14 (GIDGCGKT) contacts ATP.

The protein belongs to the thymidylate kinase family.

The enzyme catalyses dTMP + ATP = dTDP + ADP. Functionally, phosphorylation of dTMP to form dTDP in both de novo and salvage pathways of dTTP synthesis. In Anaplasma marginale (strain Florida), this protein is Thymidylate kinase.